Consider the following 152-residue polypeptide: Anaerobic nitrite reductase HBI (152 aa).

A Globin domain is found at 2–151 (ALTEKQEALL…LVATIKAEMK (150 aa)). Positions 35 to 39 (EAAPE) match the Homodimerization motif. Residues Ser-45, Lys-59, His-63, Arg-93, and His-98 each contribute to the heme b site. Residues 105 to 117 (DPHFEVMKGALLG) carry the Homodimerization motif.

This sequence belongs to the plant globin family. As to quaternary structure, homodimer. Heme b is required as a cofactor. As to expression, root nodules.

The protein resides in the cytoplasm. It is found in the nucleus. It carries out the reaction Fe(III)-heme b-[protein] + nitric oxide + H2O = Fe(II)-heme b-[protein] + nitrite + 2 H(+). Phytoglobin that reduces nitrite to nitric oxide (NO) under anoxic conditions (e.g. during flooding or in waterlogged soil) and upon root nodulation. Required for general plant development and during nodulation, especially for the onset of symbiosis. Monitors nitric oxide (NO) levels during early phase of the nitrogen-fixing symbiosis and buffers oxygen in functioning nodules. May not function as an oxygen storage or transport protein. Has an unusually high affinity for O(2) through a hexacoordinate heme iron because of a very low dissociation constant. This Casuarina glauca (Swamp oak) protein is Anaerobic nitrite reductase HBI.